A 273-amino-acid polypeptide reads, in one-letter code: Bis(5'-nucleosyl)-tetraphosphatase, symmetrical (273 aa).

The protein belongs to the Ap4A hydrolase family.

It catalyses the reaction P(1),P(4)-bis(5'-adenosyl) tetraphosphate + H2O = 2 ADP + 2 H(+). Its function is as follows. Hydrolyzes diadenosine 5',5'''-P1,P4-tetraphosphate to yield ADP. This Aeromonas salmonicida (strain A449) protein is Bis(5'-nucleosyl)-tetraphosphatase, symmetrical.